The sequence spans 466 residues: Glycylpeptide N-tetradecanoyltransferase (466 aa).

Positions 1–21 (MDNENNKNTKNSQQDSSFSEG) are disordered. Residues 8–19 (NTKNSQQDSSFS) show a composition bias toward polar residues. S17 is modified (phosphoserine). Tetradecanoyl-CoA contacts are provided by residues 51–54 (FKFW), 185–187 (LCI), and 193–197 (SKRLT). I466 acts as the Proton acceptor; via carboxylate in catalysis.

It belongs to the NMT family. In terms of assembly, monomer.

The protein localises to the cytoplasm. It carries out the reaction N-terminal glycyl-[protein] + tetradecanoyl-CoA = N-tetradecanoylglycyl-[protein] + CoA + H(+). Functionally, adds a myristoyl group to the N-terminal glycine residue of certain cellular proteins. In Schizosaccharomyces pombe (strain 972 / ATCC 24843) (Fission yeast), this protein is Glycylpeptide N-tetradecanoyltransferase (nmt1).